A 360-amino-acid chain; its full sequence is Phosphoserine aminotransferase (360 aa).

An L-glutamate-binding site is contributed by Arg42. 4 residues coordinate pyridoxal 5'-phosphate: Trp102, Thr152, Asp171, and Gln194. Residue Lys195 is modified to N6-(pyridoxal phosphate)lysine. Pyridoxal 5'-phosphate is bound at residue Asn237–Thr238.

The protein belongs to the class-V pyridoxal-phosphate-dependent aminotransferase family. SerC subfamily. In terms of assembly, homodimer. The cofactor is pyridoxal 5'-phosphate.

Its subcellular location is the cytoplasm. It carries out the reaction O-phospho-L-serine + 2-oxoglutarate = 3-phosphooxypyruvate + L-glutamate. The enzyme catalyses 4-(phosphooxy)-L-threonine + 2-oxoglutarate = (R)-3-hydroxy-2-oxo-4-phosphooxybutanoate + L-glutamate. It functions in the pathway amino-acid biosynthesis; L-serine biosynthesis; L-serine from 3-phospho-D-glycerate: step 2/3. The protein operates within cofactor biosynthesis; pyridoxine 5'-phosphate biosynthesis; pyridoxine 5'-phosphate from D-erythrose 4-phosphate: step 3/5. Its function is as follows. Catalyzes the reversible conversion of 3-phosphohydroxypyruvate to phosphoserine and of 3-hydroxy-2-oxo-4-phosphonooxybutanoate to phosphohydroxythreonine. The protein is Phosphoserine aminotransferase of Coxiella burnetii (strain CbuK_Q154) (Coxiella burnetii (strain Q154)).